A 698-amino-acid polypeptide reads, in one-letter code: G1/S-specific cyclin CCN1 (698 aa).

The span at 1-11 (MTSLQQQQQQQ) shows a compositional bias: low complexity. 5 disordered regions span residues 1 to 21 (MTSLQQQQQQQRVKYGPPHHI), 277 to 326 (QKKQ…DDED), 469 to 577 (DEDE…GSIL), 599 to 619 (SNSSNINIHHGHHNTKQEKRY), and 659 to 698 (NNTNSSSPLMNQQQQYYHQQQHQQQVTQSSLYQHHHQYHQ). Residues 277–302 (QKKQKKAFSSNSSRTTTASYTHQNQS) show a composition bias toward polar residues. Acidic residues-rich tracts occupy residues 310-326 (DEDIDLDSGDEGDDDED) and 469-480 (DEDENVSTDDEA). 2 stretches are compositionally biased toward polar residues: residues 493–520 (DGNNQLFTPKSPNAFSSNSSLTLNNHPQ) and 528–567 (PSATSQYSLFSNKNNRTHESTSGLNSTCNTPTHISISSFA). Residues 659-669 (NNTNSSSPLMN) show a composition bias toward polar residues. Residues 670 to 690 (QQQQYYHQQQHQQQVTQSSLY) are compositionally biased toward low complexity.

This sequence belongs to the cyclin family.

Its function is as follows. Essential for the control of the cell cycle at the G1/S (start) transition. Interacts with the CDC2 protein kinase to form MPF. The protein is G1/S-specific cyclin CCN1 (CCN1) of Candida albicans (strain WO-1) (Yeast).